We begin with the raw amino-acid sequence, 283 residues long: Elongation factor Ts (283 aa).

The tract at residues Thr-80–Val-83 is involved in Mg(2+) ion dislocation from EF-Tu.

This sequence belongs to the EF-Ts family.

Its subcellular location is the cytoplasm. Associates with the EF-Tu.GDP complex and induces the exchange of GDP to GTP. It remains bound to the aminoacyl-tRNA.EF-Tu.GTP complex up to the GTP hydrolysis stage on the ribosome. The chain is Elongation factor Ts from Actinobacillus succinogenes (strain ATCC 55618 / DSM 22257 / CCUG 43843 / 130Z).